The chain runs to 47 residues: Putative beta-neurotoxin (47 aa).

The 47-residue stretch at K1–G47 folds into the LCN-type CS-alpha/beta domain. 2 disulfide bridges follow: C14–C36 and C21–C43.

Expressed by the venom gland.

The protein resides in the secreted. Its function is as follows. Causes transient paralysis of the rear legs of and spasms in insects (A.domestica). The protein is Putative beta-neurotoxin of Rhopalurus junceus (Caribbean blue scorpion).